We begin with the raw amino-acid sequence, 305 residues long: Type II restriction enzyme SsoII (305 aa).

It carries out the reaction Endonucleolytic cleavage of DNA to give specific double-stranded fragments with terminal 5'-phosphates.. A P subtype restriction enzyme that recognizes the double-stranded sequence 5'-CCNGG-3' and cleaves before C-1. The sequence is that of Type II restriction enzyme SsoII (ssoIIR) from Shigella sonnei.